Consider the following 130-residue polypeptide: Small ribosomal subunit protein uS8 (130 aa).

Belongs to the universal ribosomal protein uS8 family. In terms of assembly, part of the 30S ribosomal subunit. Contacts proteins S5 and S12.

One of the primary rRNA binding proteins, it binds directly to 16S rRNA central domain where it helps coordinate assembly of the platform of the 30S subunit. The chain is Small ribosomal subunit protein uS8 from Shewanella baltica (strain OS223).